Reading from the N-terminus, the 391-residue chain is Putative protein PLEKHA9 (391 aa).

In Homo sapiens (Human), this protein is Putative protein PLEKHA9 (PLEKHA8P1).